Here is a 456-residue protein sequence, read N- to C-terminus: Adenylosuccinate synthetase isozyme 2 (456 aa).

The segment covering 1–14 (MSISESSPAATSLP) has biased composition (polar residues). Residues 1-24 (MSISESSPAATSLPNGDCGRPRAR) are disordered. Residues 39-45 (GDEGKGK) and 67-69 (GHT) contribute to the GTP site. The Proton acceptor role is filled by Asp40. Asp40 and Gly67 together coordinate Mg(2+). Asp40 contributes to the substrate binding site. Residues 40-43 (DEGK), 65-68 (NAGH), Thr162, Arg176, Asn255, Thr270, and Arg334 each bind IMP. His68 acts as the Proton donor in catalysis. Residue 330-336 (VTTGRKR) participates in substrate binding. GTP is bound by residues Arg336, 362 to 364 (KLD), and 444 to 447 (GVGK).

It belongs to the adenylosuccinate synthetase family. As to quaternary structure, homodimer. It depends on Mg(2+) as a cofactor.

Its subcellular location is the cytoplasm. It is found in the mitochondrion. The enzyme catalyses IMP + L-aspartate + GTP = N(6)-(1,2-dicarboxyethyl)-AMP + GDP + phosphate + 2 H(+). It functions in the pathway purine metabolism; AMP biosynthesis via de novo pathway; AMP from IMP: step 1/2. With respect to regulation, inhibited competitively by AMP and IMP and non-competitively by fructose 1,6-bisphosphate. Its function is as follows. Plays an important role in the de novo pathway and in the salvage pathway of purine nucleotide biosynthesis. Catalyzes the first committed step in the biosynthesis of AMP from IMP. The chain is Adenylosuccinate synthetase isozyme 2 (Adss2) from Mus musculus (Mouse).